The sequence spans 441 residues: ATP-dependent protease ATPase subunit HslU (441 aa).

ATP contacts are provided by residues Ile18, 60–65, Asp254, Glu319, and Arg391; that span reads GVGKTE.

Belongs to the ClpX chaperone family. HslU subfamily. As to quaternary structure, a double ring-shaped homohexamer of HslV is capped on each side by a ring-shaped HslU homohexamer. The assembly of the HslU/HslV complex is dependent on binding of ATP.

It localises to the cytoplasm. Its function is as follows. ATPase subunit of a proteasome-like degradation complex; this subunit has chaperone activity. The binding of ATP and its subsequent hydrolysis by HslU are essential for unfolding of protein substrates subsequently hydrolyzed by HslV. HslU recognizes the N-terminal part of its protein substrates and unfolds these before they are guided to HslV for hydrolysis. In Shewanella woodyi (strain ATCC 51908 / MS32), this protein is ATP-dependent protease ATPase subunit HslU.